The chain runs to 366 residues: tRNA/tmRNA (uracil-C(5))-methyltransferase (366 aa).

S-adenosyl-L-methionine-binding residues include glutamine 190, tyrosine 218, asparagine 223, glutamate 239, and aspartate 299. Cysteine 324 functions as the Nucleophile in the catalytic mechanism. Residue glutamate 358 is the Proton acceptor of the active site.

This sequence belongs to the class I-like SAM-binding methyltransferase superfamily. RNA M5U methyltransferase family. TrmA subfamily.

The enzyme catalyses uridine(54) in tRNA + S-adenosyl-L-methionine = 5-methyluridine(54) in tRNA + S-adenosyl-L-homocysteine + H(+). It carries out the reaction uridine(341) in tmRNA + S-adenosyl-L-methionine = 5-methyluridine(341) in tmRNA + S-adenosyl-L-homocysteine + H(+). Dual-specificity methyltransferase that catalyzes the formation of 5-methyluridine at position 54 (m5U54) in all tRNAs, and that of position 341 (m5U341) in tmRNA (transfer-mRNA). This is tRNA/tmRNA (uracil-C(5))-methyltransferase from Escherichia coli O6:H1 (strain CFT073 / ATCC 700928 / UPEC).